A 627-amino-acid polypeptide reads, in one-letter code: DNA mismatch repair protein MutL (627 aa).

Positions 363-397 (FAEPAAREPVAPRYSPAPASGSRPAAPWPNAQPGY) are disordered. The segment covering 364-387 (AEPAAREPVAPRYSPAPASGSRPA) has biased composition (low complexity).

The protein belongs to the DNA mismatch repair MutL/HexB family.

In terms of biological role, this protein is involved in the repair of mismatches in DNA. It is required for dam-dependent methyl-directed DNA mismatch repair. May act as a 'molecular matchmaker', a protein that promotes the formation of a stable complex between two or more DNA-binding proteins in an ATP-dependent manner without itself being part of a final effector complex. The sequence is that of DNA mismatch repair protein MutL from Shigella flexneri serotype 5b (strain 8401).